The following is a 360-amino-acid chain: MDGSHCKVIAPLLTERHQRMVTKDGHSTLQMDGAQTGLAYLRDAWGILMDMRWRWMMLVFSASFVIHWLVFAVLWYILAEMNGDLGLDHDAPPENHTICVKYITSFTAAFSFSLETQLTIGYGTMFPSGDCPSAIALLAIQMLLGLMLEAFITGAFVAKIARPKNRAFSIRFTDLAVVAHIDGKPNLIFQVANTRPSPLTNVRVSAVLYQERENGKLYQTSVDFHLDGISSEECPFFIFPLTYYHSIIPSSPLATLLQHENPPHFELVVFLSAMQEGTGETCQRRTSYLPSEIMLHHCFASLLARGSKGEYQIKMENFDKTTPEFQTPLVSKSPNRTDLDIHINGQSIDNFQISETGLTE.

At M1–D50 the chain is on the cytoplasmic side. The helical transmembrane segment at M51–I77 threads the bilayer. The Extracellular portion of the chain corresponds to L78 to S105. Positions F106–Y122 form an intramembrane region, helical; Pore-forming. The Selectivity filter signature appears at T119–T124. Over G123–C131 the chain is Extracellular. A helical transmembrane segment spans residues P132–V157. Residues A158–E360 lie on the Cytoplasmic side of the membrane. A Phosphoserine modification is found at S287.

It belongs to the inward rectifier-type potassium channel (TC 1.A.2.1) family. In terms of assembly, homotetramer. Interacts with RAB28; the interaction may facilitate cone outer segments phagocytosis. Post-translationally, phosphorylation at Ser-287 by PKA increases them.

Its subcellular location is the membrane. The protein localises to the cell membrane. It catalyses the reaction K(+)(in) = K(+)(out). Inhibited by Ba(2+) and Cs(+), although sensitivity to those inhibitors is much lower than in other Kir channels. Its function is as follows. Inward rectifier potassium channels are characterized by a greater tendency to allow potassium to flow into the cell rather than out of it. Their voltage dependence is regulated by the concentration of extracellular potassium; as external potassium is raised, the voltage range of the channel opening shifts to more positive voltages. The inward rectification is mainly due to the blockage of outward current by internal magnesium. KCNJ13 has a very low single channel conductance, low sensitivity to block by external barium and cesium, and no dependence of its inward rectification properties on the internal blocking particle magnesium. The sequence is that of Inward rectifier potassium channel 13 (KCNJ13) from Bos taurus (Bovine).